A 268-amino-acid polypeptide reads, in one-letter code: Tetraspanin-33 (268 aa).

Residues 1-23 lie on the Cytoplasmic side of the membrane; it reads MVRKSPGSGKEEDFTFISPVVKY. Residues 24-44 form a helical membrane-spanning segment; it reads LLIFFNMLFWVISMVMVGIGV. At 45–63 the chain is on the extracellular side; it reads YARLLKHAEAAMACLAVDP. Residues 64-84 form a helical membrane-spanning segment; it reads ALLLIGVGILMFLITFCGCIG. Over 85 to 95 the chain is Cytoplasmic; sequence SLRENICLLQT. A helical membrane pass occupies residues 96 to 116; it reads FSICLTLVFLLQLAVGIVGFI. The Extracellular portion of the chain corresponds to 117–226; it reads FSDKARGKVS…FIHTNGCIDR (110 aa). Disulfide bonds link Cys155/Cys223, Cys156/Cys188, Cys172/Cys182, and Cys189/Cys202. N-linked (GlcNAc...) asparagine glycosylation is found at Asn171 and Asn176. A helical transmembrane segment spans residues 227 to 247; the sequence is LVNWIHSNLFLLGGVALGLAI. Topologically, residues 248–268 are cytoplasmic; it reads PQVTKHLRAKLIYTWRIGIQV.

This sequence belongs to the tetraspanin (TM4SF) family. Homodimer; disulfide-linked.

The protein resides in the cell membrane. The protein localises to the cell junction. Its subcellular location is the adherens junction. It localises to the cytoplasm. Its function is as follows. Part of TspanC8 subgroup, composed of 6 members that interact with the transmembrane metalloprotease ADAM10. This interaction is required for ADAM10 exit from the endoplasmic reticulum and for enzymatic maturation and trafficking to the cell surface as well as substrate specificity. Different TspanC8/ADAM10 complexes have distinct substrates. The sequence is that of Tetraspanin-33 (tspan33) from Xenopus laevis (African clawed frog).